Reading from the N-terminus, the 629-residue chain is tRNA uridine 5-carboxymethylaminomethyl modification enzyme MnmG (629 aa).

13–18 (GGGHAG) lines the FAD pocket. 273-287 (GPRYCPSIEDKITRF) contacts NAD(+).

Belongs to the MnmG family. In terms of assembly, homodimer. Heterotetramer of two MnmE and two MnmG subunits. FAD serves as cofactor.

Its subcellular location is the cytoplasm. In terms of biological role, NAD-binding protein involved in the addition of a carboxymethylaminomethyl (cmnm) group at the wobble position (U34) of certain tRNAs, forming tRNA-cmnm(5)s(2)U34. This chain is tRNA uridine 5-carboxymethylaminomethyl modification enzyme MnmG, found in Aeromonas hydrophila subsp. hydrophila (strain ATCC 7966 / DSM 30187 / BCRC 13018 / CCUG 14551 / JCM 1027 / KCTC 2358 / NCIMB 9240 / NCTC 8049).